Reading from the N-terminus, the 489-residue chain is F-box/LRR-repeat protein 7 (489 aa).

The segment covering 1–31 (MGANNGKQSGSEGKGSSSISSDLSSSTDQTS) has biased composition (low complexity). The segment at 1–76 (MGANNGKQSG…AVLNGSSTSS (76 aa)) is disordered. Residues 32-55 (TKAPKNAATSEDSDLSMRTVSTPS) show a composition bias toward polar residues. Residues 64 to 76 (SSSAVLNGSSTSS) show a composition bias toward low complexity. Residues 109–155 (GAPVDILPDHAFLQIFTHLPTNQLCRCARVCRRWYNLAWDPRLWRTI) enclose the F-box domain. LRR repeat units lie at residues 168–193 (LRVL…MVSG), 194–219 (CRRL…EVAG), 220–245 (CYNV…DVSG), 251–279 (CISL…DMTD), 280–305 (CFAL…YLRR), 306–331 (CVRL…SVSD), 332–357 (CRFI…SIAH), 358–383 (CSRI…NARG), 384–409 (CEGL…DIGK), 410–435 (CPLV…SLKS), and 436–461 (CESI…NVQD).

It belongs to the FBXL7 family. As to quaternary structure, part of the SCF (SKP1-CUL1-F-box) E3 ubiquitin-protein ligase complex SCF(FBXL7).

It localises to the cytoplasm. The protein localises to the cytoskeleton. Its subcellular location is the microtubule organizing center. It is found in the centrosome. Its pathway is protein modification; protein ubiquitination. Its function is as follows. Substrate recognition component of a SCF (SKP1-CUL1-F-box protein) E3 ubiquitin-protein ligase complex which mediates the ubiquitination and subsequent proteasomal degradation of target proteins. This is F-box/LRR-repeat protein 7 (fbxl7) from Danio rerio (Zebrafish).